The sequence spans 351 residues: Ion-translocating oxidoreductase complex subunit D (351 aa).

A run of 4 helical transmembrane segments spans residues 20-40, 44-64, 89-109, and 123-143; these read IMLW…YFFG, LIQV…TLSL, LPPL…IIIA, and PAMI…TSWL. Thr187 carries the FMN phosphoryl threonine modification. 5 consecutive transmembrane segments (helical) span residues 215–235, 244–264, 267–287, 301–321, and 322–342; these read LSGI…LFLL, IPVS…IIAP, FAQP…FFIA, LIFG…GGYP, and DGVA…DYYT.

The protein belongs to the NqrB/RnfD family. As to quaternary structure, the complex is composed of six subunits: RnfA, RnfB, RnfC, RnfD, RnfE and RnfG. FMN is required as a cofactor.

It localises to the cell inner membrane. Part of a membrane-bound complex that couples electron transfer with translocation of ions across the membrane. In Pectobacterium atrosepticum (strain SCRI 1043 / ATCC BAA-672) (Erwinia carotovora subsp. atroseptica), this protein is Ion-translocating oxidoreductase complex subunit D.